Reading from the N-terminus, the 366-residue chain is HTH-type transcriptional regulator MSMEG_6044/MSMEI_5883 (366 aa).

The region spanning 11–66 is the HTH lacI-type domain; sequence ATLASLAAELKVSRTTISNAYNRPDQLSADLRERIFDAAKRLGYPGPDPVARSLRT. Positions 13-32 form a DNA-binding region, H-T-H motif; the sequence is LASLAAELKVSRTTISNAYN.

Transcriptional regulator that negatively regulates transcription of the mce4 operon, which is involved in cholesterol transport and utilization. Acts by binding to the promoter region of the mce4 operon. In Mycolicibacterium smegmatis (strain ATCC 700084 / mc(2)155) (Mycobacterium smegmatis), this protein is HTH-type transcriptional regulator MSMEG_6044/MSMEI_5883.